Reading from the N-terminus, the 69-residue chain is Cytochrome b-c1 complex subunit 6-1, mitochondrial (69 aa).

Disulfide bonds link Cys-17–Cys-59 and Cys-31–Cys-45.

The protein belongs to the UQCRH/QCR6 family. Component of the ubiquinol-cytochrome c oxidoreductase (cytochrome b-c1 complex, complex III, CIII), a multisubunit enzyme composed of 10 subunits. The complex is composed of 3 respiratory subunits cytochrome b (MT-CYB), cytochrome c1 (CYC1-1 or CYC1-2) and Rieske protein (UCR1-1 or UCR1-2), 2 core protein subunits MPPalpha1 (or MPPalpha2) and MPPB, and 5 low-molecular weight protein subunits QCR7-1 (or QCR7-2), UCRQ-1 (or UCRQ-2), QCR9, UCRY and probably QCR6-1 (or QCR6-2). The complex exists as an obligatory dimer and forms supercomplexes (SCs) in the inner mitochondrial membrane with NADH-ubiquinone oxidoreductase (complex I, CI), resulting in different assemblies (supercomplexes SCI(1)III(2) and SCI(2)III(4)).

It localises to the mitochondrion inner membrane. Its function is as follows. Component of the ubiquinol-cytochrome c oxidoreductase, a multisubunit transmembrane complex that is part of the mitochondrial electron transport chain which drives oxidative phosphorylation. The respiratory chain contains 3 multisubunit complexes succinate dehydrogenase (complex II, CII), ubiquinol-cytochrome c oxidoreductase (cytochrome b-c1 complex, complex III, CIII) and cytochrome c oxidase (complex IV, CIV), that cooperate to transfer electrons derived from NADH and succinate to molecular oxygen, creating an electrochemical gradient over the inner membrane that drives transmembrane transport and the ATP synthase. The cytochrome b-c1 complex catalyzes electron transfer from ubiquinol to cytochrome c, linking this redox reaction to translocation of protons across the mitochondrial inner membrane, with protons being carried across the membrane as hydrogens on the quinol. In the process called Q cycle, 2 protons are consumed from the matrix, 4 protons are released into the intermembrane space and 2 electrons are passed to cytochrome c. The sequence is that of Cytochrome b-c1 complex subunit 6-1, mitochondrial (QCR6-1) from Arabidopsis thaliana (Mouse-ear cress).